Reading from the N-terminus, the 125-residue chain is Outer membrane protein assembly factor BamE (125 aa).

Residues 1–17 (MNKTLILALSALLGLAA) form the signal peptide. Residue C18 is the site of N-palmitoyl cysteine attachment. C18 carries S-diacylglycerol cysteine lipidation.

It belongs to the BamE family. As to quaternary structure, part of the Bam complex.

Its subcellular location is the cell outer membrane. Part of the outer membrane protein assembly complex, which is involved in assembly and insertion of beta-barrel proteins into the outer membrane. In Neisseria meningitidis serogroup B (strain ATCC BAA-335 / MC58), this protein is Outer membrane protein assembly factor BamE.